A 665-amino-acid chain; its full sequence is tRNA 5-methylaminomethyl-2-thiouridine biosynthesis bifunctional protein MnmC (665 aa).

A tRNA (mnm(5)s(2)U34)-methyltransferase region spans residues 1–243 (MSQTSLHHAR…KREMLAGERA (243 aa)). The interval 268–665 (IGGGIASAMT…RKLLKGKPLQ (398 aa)) is FAD-dependent cmnm(5)s(2)U34 oxidoreductase.

In the N-terminal section; belongs to the methyltransferase superfamily. tRNA (mnm(5)s(2)U34)-methyltransferase family. This sequence in the C-terminal section; belongs to the DAO family. FAD serves as cofactor.

Its subcellular location is the cytoplasm. The enzyme catalyses 5-aminomethyl-2-thiouridine(34) in tRNA + S-adenosyl-L-methionine = 5-methylaminomethyl-2-thiouridine(34) in tRNA + S-adenosyl-L-homocysteine + H(+). In terms of biological role, catalyzes the last two steps in the biosynthesis of 5-methylaminomethyl-2-thiouridine (mnm(5)s(2)U) at the wobble position (U34) in tRNA. Catalyzes the FAD-dependent demodification of cmnm(5)s(2)U34 to nm(5)s(2)U34, followed by the transfer of a methyl group from S-adenosyl-L-methionine to nm(5)s(2)U34, to form mnm(5)s(2)U34. This is tRNA 5-methylaminomethyl-2-thiouridine biosynthesis bifunctional protein MnmC from Aeromonas hydrophila subsp. hydrophila (strain ATCC 7966 / DSM 30187 / BCRC 13018 / CCUG 14551 / JCM 1027 / KCTC 2358 / NCIMB 9240 / NCTC 8049).